The following is a 191-amino-acid chain: Adenylate kinase (191 aa).

11-16 (GAGKGT) is an ATP binding site. An NMP region spans residues 31–60 (STGDILRSNVAERSPLGIKAKDYMDKGDLV). Residues Thr-32, Arg-37, 58–60 (DLV), 86–89 (GFPR), and Gln-93 each bind AMP. The tract at residues 132–138 (SRKREDD) is LID. Residue Arg-133 participates in ATP binding. AMP contacts are provided by Arg-135 and Arg-146. Asn-174 serves as a coordination point for ATP.

Belongs to the adenylate kinase family. As to quaternary structure, monomer.

It localises to the cytoplasm. It carries out the reaction AMP + ATP = 2 ADP. The protein operates within purine metabolism; AMP biosynthesis via salvage pathway; AMP from ADP: step 1/1. Its function is as follows. Catalyzes the reversible transfer of the terminal phosphate group between ATP and AMP. Plays an important role in cellular energy homeostasis and in adenine nucleotide metabolism. This chain is Adenylate kinase, found in Trichodesmium erythraeum (strain IMS101).